A 152-amino-acid chain; its full sequence is Deoxyuridine 5'-triphosphate nucleotidohydrolase (152 aa).

Substrate-binding positions include 63 to 65, Asn76, and 80 to 82; these read RSG and TID. Residues 129–152 form a disordered region; sequence LDDTERGQGGYGSTGVSAMPPVDG.

Belongs to the dUTPase family. Mg(2+) is required as a cofactor.

The catalysed reaction is dUTP + H2O = dUMP + diphosphate + H(+). It participates in pyrimidine metabolism; dUMP biosynthesis; dUMP from dCTP (dUTP route): step 2/2. In terms of biological role, this enzyme is involved in nucleotide metabolism: it produces dUMP, the immediate precursor of thymidine nucleotides and it decreases the intracellular concentration of dUTP so that uracil cannot be incorporated into DNA. This is Deoxyuridine 5'-triphosphate nucleotidohydrolase from Cutibacterium acnes (strain DSM 16379 / KPA171202) (Propionibacterium acnes).